The following is a 272-amino-acid chain: Shikimate dehydrogenase (NADP(+)) (272 aa).

Shikimate contacts are provided by residues 14-16 (SKS) and Thr61. Lys65 functions as the Proton acceptor in the catalytic mechanism. Glu77 is a binding site for NADP(+). Shikimate is bound by residues Asn86 and Asp102. NADP(+) is bound by residues 126-130 (GAGGA), 149-154 (NRTQEK), and Met213. Residue Tyr215 coordinates shikimate. An NADP(+)-binding site is contributed by Gly237.

It belongs to the shikimate dehydrogenase family. As to quaternary structure, homodimer.

The enzyme catalyses shikimate + NADP(+) = 3-dehydroshikimate + NADPH + H(+). It functions in the pathway metabolic intermediate biosynthesis; chorismate biosynthesis; chorismate from D-erythrose 4-phosphate and phosphoenolpyruvate: step 4/7. Its function is as follows. Involved in the biosynthesis of the chorismate, which leads to the biosynthesis of aromatic amino acids. Catalyzes the reversible NADPH linked reduction of 3-dehydroshikimate (DHSA) to yield shikimate (SA). The protein is Shikimate dehydrogenase (NADP(+)) of Erwinia tasmaniensis (strain DSM 17950 / CFBP 7177 / CIP 109463 / NCPPB 4357 / Et1/99).